The primary structure comprises 426 residues: Enolase (426 aa).

Q162 provides a ligand contact to (2R)-2-phosphoglycerate. The active-site Proton donor is E204. D241, E288, and D315 together coordinate Mg(2+). The (2R)-2-phosphoglycerate site is built by K340, R369, S370, and K391. The Proton acceptor role is filled by K340.

The protein belongs to the enolase family. It depends on Mg(2+) as a cofactor.

The protein localises to the cytoplasm. Its subcellular location is the secreted. It localises to the cell surface. It catalyses the reaction (2R)-2-phosphoglycerate = phosphoenolpyruvate + H2O. The protein operates within carbohydrate degradation; glycolysis; pyruvate from D-glyceraldehyde 3-phosphate: step 4/5. Its function is as follows. Catalyzes the reversible conversion of 2-phosphoglycerate (2-PG) into phosphoenolpyruvate (PEP). It is essential for the degradation of carbohydrates via glycolysis. In Bacteroides thetaiotaomicron (strain ATCC 29148 / DSM 2079 / JCM 5827 / CCUG 10774 / NCTC 10582 / VPI-5482 / E50), this protein is Enolase.